A 309-amino-acid chain; its full sequence is Ribonuclease Z (309 aa).

Zn(2+) is bound by residues H63, H65, D67, H68, H141, D212, and H270. D67 serves as the catalytic Proton acceptor.

It belongs to the RNase Z family. In terms of assembly, homodimer. Zn(2+) is required as a cofactor.

It catalyses the reaction Endonucleolytic cleavage of RNA, removing extra 3' nucleotides from tRNA precursor, generating 3' termini of tRNAs. A 3'-hydroxy group is left at the tRNA terminus and a 5'-phosphoryl group is left at the trailer molecule.. In terms of biological role, zinc phosphodiesterase, which displays some tRNA 3'-processing endonuclease activity. Probably involved in tRNA maturation, by removing a 3'-trailer from precursor tRNA. This Lactobacillus gasseri (strain ATCC 33323 / DSM 20243 / BCRC 14619 / CIP 102991 / JCM 1131 / KCTC 3163 / NCIMB 11718 / NCTC 13722 / AM63) protein is Ribonuclease Z.